The primary structure comprises 1436 residues: Pleiotropic drug resistance protein 1 (1436 aa).

The ABC transporter 1 domain occupies 165–438; it reads LDSIHILPSK…FESMGFKCPE (274 aa). 198–205 contacts ATP; it reads GPPGSGKT. The ABC transmembrane type-2 1 domain maps to 516–729; sequence QLLKVCTERE…SVNAILVNEF (214 aa). 7 helical membrane passes run 534–554, 567–587, 622–642, 653–673, 679–699, 707–727, and 764–784; these read FVYL…MTIF, GGIY…NGLS, IPVT…VMGF, FLLL…IAAV, VAST…GFIL, WWIW…ILVN, and IGVG…SVAL. Positions 796 to 826 are disordered; the sequence is TISDESENNESESSPQITSTQEGDSASENKK. A compositionally biased stretch (polar residues) spans 810-821; that stretch reads PQITSTQEGDSA. The 253-residue stretch at 838–1090 folds into the ABC transporter 2 domain; sequence ITFDEVVYSV…HLIKYFESIP (253 aa). Residue 883 to 890 coordinates ATP; it reads GVSGAGKT. The ABC transmembrane type-2 2 domain maps to 1163-1377; sequence TQCMACLWKQ…TLYGLVASQF (215 aa). The next 7 helical transmembrane spans lie at 1184–1204, 1214–1234, 1270–1290, 1301–1321, 1327–1347, 1358–1378, and 1408–1428; these read AVRL…FWDI, LVNA…QNSS, IPYI…MIGF, FFFM…TVAV, VASI…GFIV, WYYW…SQFG, and VVAA…ALGI.

It belongs to the ABC transporter superfamily. ABCG family. PDR (TC 3.A.1.205) subfamily. Roots, petals and leaf epidermis, where it is confined to glandular trichomes (at protein level).

It localises to the cell membrane. In terms of biological role, excretes secondary metabolites such as terpenes. Involved in both constitutive and jasmonic acid-dependent induced defense. Confers some resistance to sclareol and B.cinerea. In Nicotiana plumbaginifolia (Leadwort-leaved tobacco), this protein is Pleiotropic drug resistance protein 1 (PDR1).